Reading from the N-terminus, the 82-residue chain is Chaperone protein DnaJ 1 (82 aa).

The tract at residues 1-33 (YHLGGPPVTLKLPPGTPAGRTMRARGKGAVRKD) is disordered.

The protein belongs to the DnaJ family. Homodimer. It depends on Zn(2+) as a cofactor.

It localises to the cytoplasm. Functionally, participates actively in the response to hyperosmotic and heat shock by preventing the aggregation of stress-denatured proteins and by disaggregating proteins, also in an autonomous, DnaK-independent fashion. Unfolded proteins bind initially to DnaJ; upon interaction with the DnaJ-bound protein, DnaK hydrolyzes its bound ATP, resulting in the formation of a stable complex. GrpE releases ADP from DnaK; ATP binding to DnaK triggers the release of the substrate protein, thus completing the reaction cycle. Several rounds of ATP-dependent interactions between DnaJ, DnaK and GrpE are required for fully efficient folding. Also involved, together with DnaK and GrpE, in the DNA replication of plasmids through activation of initiation proteins. This is Chaperone protein DnaJ 1 (dnaJ1) from Streptomyces albus G.